The chain runs to 396 residues: Aspartic protease 1 (396 aa).

An N-terminal signal peptide occupies residues 1 to 15; it reads MQTFVLLALVAACSA. The region spanning 68-389 is the Peptidase A1 domain; the sequence is YLGNITLGTP…DIGNGQIGFA (322 aa). N-linked (GlcNAc...) asparagine glycosylation is present at N71. D86 is an active-site residue. Cysteines 99 and 104 form a disulfide. D278 is an active-site residue. An intrachain disulfide couples C313 to C349.

The protein belongs to the peptidase A1 family. Interacts with B.thuringiensis endotoxin Cry6Aa; the interaction prevents Cry6Aa proteolysis by host gut proteases.

The protein resides in the cytoplasm. Its subcellular location is the lysosome. It is found in the secreted. In terms of biological role, aspartic protease, which is part of the necrosis cell death pathway. Promotes B.thuringiensis Cry6Aa stability by preventing its proteolysis by host gut proteases. Required for Cry6Aa-induced necrotic death of intestinal cells. Cry6Aa uptake into the host intestinal cells triggers an increase in intracellular Ca(2+) levels leading to lysosome rupture and to the subsequent release of asp-1 which leads to necrosis. In Caenorhabditis elegans, this protein is Aspartic protease 1.